We begin with the raw amino-acid sequence, 461 residues long: Demethyllactenocin mycarosyltransferase (461 aa).

Positions 1–21 (MAGLRPGAGVPPGTPWPISPG) are disordered.

It belongs to the UDP-glycosyltransferase family.

It catalyses the reaction dTDP-beta-L-mycarose + demethyllactenocin = demethylmacrocin + dTDP + H(+). In terms of biological role, involved in the biosynthesis of mycarose which is a 6-deoxyhexose sugar required during production of the macrolide antibiotic tylosin. Catalyzes the transfer of L-mycarosyl from dTDP-beta-L-mycarose to demethyllactenocin to yield demethylmacrocin. The protein is Demethyllactenocin mycarosyltransferase (tylCV) of Streptomyces fradiae (Streptomyces roseoflavus).